A 706-amino-acid chain; its full sequence is Melanopsin (706 aa).

The Extracellular segment spans residues 1 to 86; that stretch reads MTEIPSFQPP…VWDIPPLAHY (86 aa). 3 N-linked (GlcNAc...) asparagine glycosylation sites follow: Asn-12, Asn-64, and Asn-69. The helical transmembrane segment at 87–107 threads the bilayer; the sequence is IVGTAVFCIGCCGMFGNAVVV. The Cytoplasmic segment spans residues 108-121; that stretch reads YSFIKSKGLRTPAN. A helical transmembrane segment spans residues 122-142; sequence FFIINLALSDFLMNLTNMPIF. Residues 143–159 lie on the Extracellular side of the membrane; it reads AVNSAFQRWLLSDFACE. Cys-158 and Cys-236 are disulfide-bonded. A helical membrane pass occupies residues 160-180; it reads LYGFAGGLFGCLSINTLMAIS. Residues 181 to 201 lie on the Cytoplasmic side of the membrane; the sequence is MDRYLVITKPFLVMRIVTKQR. Residues 202–222 traverse the membrane as a helical segment; sequence VMFAILLLWIWSLVWALPPLF. Residues 223–248 are Extracellular-facing; sequence GWSAYVSEGFGTSCTFDYMTPKLSYH. Residues 249–269 traverse the membrane as a helical segment; sequence IFTYIIFFTMYFIPGGVMIYC. Residues 270-314 are Cytoplasmic-facing; that stretch reads YYNIFATVKSGDKQFGKAVKEMAHEDVKNKAQQERQRKNEIKTAK. A helical transmembrane segment spans residues 315 to 335; that stretch reads IAFIVISLFMSAWTPYAVVSA. The Extracellular segment spans residues 336-351; that stretch reads LGTLGYQDLVTPYLQS. The helical transmembrane segment at 352-372 threads the bilayer; sequence IPAMFAKSSAVYSPIVYAITY. The residue at position 358 (Lys-358) is an N6-(retinylidene)lysine. Residues 373–706 are Cytoplasmic-facing; the sequence is PKFREAVKKH…LSEAHDETVL (334 aa). Disordered stretches follow at residues 393–446, 571–599, and 630–658; these read SEEE…RQDT, RTES…SFNT, and QSSE…NETE. Composition is skewed to low complexity over residues 404 to 418 and 426 to 442; these read QSSA…QTTA and SVDS…SGVS. Over residues 571–593 the composition is skewed to basic and acidic residues; it reads RTESGYDRSQDSQRKKVVGDTHR. Over residues 645–658 the composition is skewed to acidic residues; the sequence is GITEVDTDSENETE.

The protein belongs to the G-protein coupled receptor 1 family. Opsin subfamily. As to expression, expressed in Joseph cells and photoreceptor cells of the dorsal ocelli.

The protein localises to the cell membrane. In terms of biological role, photoreceptor implicated in non-image-forming responses to light. Photoisomerizes covalently bound all-trans retinal back to 11-cis retinal. Most likely coupled to the G(q) signaling cascade. In Branchiostoma belcheri (Amphioxus), this protein is Melanopsin.